Consider the following 148-residue polypeptide: Ribonuclease H (148 aa).

The 142-residue stretch at 3–144 folds into the RNase H type-1 domain; it reads DKEQVVIYTD…ADQLANRGVA (142 aa). Residues Asp-12, Glu-50, Asp-72, and Asp-136 each contribute to the Mg(2+) site. The disordered stretch occupies residues 125–148; that stretch reads GHTGDPGNERADQLANRGVAELPR.

It belongs to the RNase H family. As to quaternary structure, monomer. It depends on Mg(2+) as a cofactor.

The protein resides in the cytoplasm. The enzyme catalyses Endonucleolytic cleavage to 5'-phosphomonoester.. In terms of biological role, endonuclease that specifically degrades the RNA of RNA-DNA hybrids. This chain is Ribonuclease H, found in Pseudomonas paraeruginosa (strain DSM 24068 / PA7) (Pseudomonas aeruginosa (strain PA7)).